The following is a 142-amino-acid chain: Small ribosomal subunit protein bS18m (142 aa).

It belongs to the bacterial ribosomal protein bS18 family. As to quaternary structure, component of the mitochondrial small ribosomal subunit (mt-SSU). Mature mammalian 55S mitochondrial ribosomes consist of a small (28S) and a large (39S) subunit. The 28S small subunit contains a 12S ribosomal RNA (12S mt-rRNA) and 30 different proteins. The 39S large subunit contains a 16S rRNA (16S mt-rRNA), a copy of mitochondrial valine transfer RNA (mt-tRNA(Val)), which plays an integral structural role, and 52 different proteins. bS18m has a zinc binding site.

It localises to the mitochondrion. This is Small ribosomal subunit protein bS18m (MRPS18C) from Homo sapiens (Human).